Here is a 136-residue protein sequence, read N- to C-terminus: Serine--glyoxylate aminotransferase (136 aa).

This sequence belongs to the class-V pyridoxal-phosphate-dependent aminotransferase family. As to quaternary structure, homodimer. Pyridoxal 5'-phosphate serves as cofactor. Expressed in leaves but not in root tissue or seedlings.

It localises to the peroxisome. The enzyme catalyses glyoxylate + L-serine = 3-hydroxypyruvate + glycine. The catalysed reaction is glyoxylate + L-alanine = glycine + pyruvate. Inhibited by aminooxyacetate. The polypeptide is Serine--glyoxylate aminotransferase (Zea mays (Maize)).